Here is a 61-residue protein sequence, read N- to C-terminus: Large ribosomal subunit protein uL29 (61 aa).

It belongs to the universal ribosomal protein uL29 family.

In Stenotrophomonas maltophilia (strain K279a), this protein is Large ribosomal subunit protein uL29.